We begin with the raw amino-acid sequence, 366 residues long: Pectinesterase A (366 aa).

The signal sequence occupies residues 1-24; that stretch reads MLKTISGTLALSLIIAASVHQAQA. Residues Thr-109 and Gln-153 each coordinate substrate. Asp-178 serves as the catalytic Proton donor. Cysteines 192 and 212 form a disulfide. The active-site Nucleophile is Asp-199. The substrate site is built by Arg-219, Asn-226, Tyr-230, Arg-267, Trp-269, and Thr-272.

Belongs to the pectinesterase family. In terms of assembly, monomer.

It localises to the secreted. The catalysed reaction is [(1-&gt;4)-alpha-D-galacturonosyl methyl ester](n) + n H2O = [(1-&gt;4)-alpha-D-galacturonosyl](n) + n methanol + n H(+). The protein operates within glycan metabolism; pectin degradation; 2-dehydro-3-deoxy-D-gluconate from pectin: step 1/5. Its function is as follows. Catalyzes the first step in maceration and soft-rotting of plant tissue. This Dickeya dadantii (strain 3937) (Erwinia chrysanthemi (strain 3937)) protein is Pectinesterase A.